Consider the following 419-residue polypeptide: UDP-N-acetylglucosamine 1-carboxyvinyltransferase (419 aa).

Position 22 to 23 (22 to 23) interacts with phosphoenolpyruvate; that stretch reads KN. R92 contacts UDP-N-acetyl-alpha-D-glucosamine. The active-site Proton donor is C116. At C116 the chain carries 2-(S-cysteinyl)pyruvic acid O-phosphothioketal. UDP-N-acetyl-alpha-D-glucosamine is bound by residues D307 and V329.

It belongs to the EPSP synthase family. MurA subfamily.

Its subcellular location is the cytoplasm. The enzyme catalyses phosphoenolpyruvate + UDP-N-acetyl-alpha-D-glucosamine = UDP-N-acetyl-3-O-(1-carboxyvinyl)-alpha-D-glucosamine + phosphate. The protein operates within cell wall biogenesis; peptidoglycan biosynthesis. Its function is as follows. Cell wall formation. Adds enolpyruvyl to UDP-N-acetylglucosamine. In Pseudothermotoga lettingae (strain ATCC BAA-301 / DSM 14385 / NBRC 107922 / TMO) (Thermotoga lettingae), this protein is UDP-N-acetylglucosamine 1-carboxyvinyltransferase.